Here is a 472-residue protein sequence, read N- to C-terminus: P2X purinoceptor 2 (472 aa).

Residues 1 to 34 (MVRRLARGCWSAFWDYETPKVIVVRNRRLGFVHR) lie on the Cytoplasmic side of the membrane. Disulfide bonds link cysteine 9/cysteine 430, cysteine 113/cysteine 164, cysteine 124/cysteine 147, cysteine 130/cysteine 158, cysteine 214/cysteine 224, and cysteine 258/cysteine 267. A helical membrane pass occupies residues 35–52 (MVQLLILLYFVWYVFIVQ). Residues 53 to 326 (KSYQDSETGP…IVHGQAGKFS (274 aa)) lie on the Extracellular side of the membrane. ATP is bound by residues lysine 69 and lysine 71. N-linked (GlcNAc...) asparagine glycosylation occurs at asparagine 182. Threonine 184 contacts ATP. Asparagine 239 carries an N-linked (GlcNAc...) asparagine glycan. Positions 284, 288, and 290 each coordinate ATP. N-linked (GlcNAc...) asparagine glycosylation is present at asparagine 298. Residue lysine 308 coordinates ATP. Residues 309–322 (AYGIRIDVIVHGQA) are pore-forming motif. The chain crosses the membrane as a helical span at residues 327–347 (LIPTIINLATALTSIGVGSFL). At 348 to 472 (CDWILLTFMN…STDPKGLAQL (125 aa)) the chain is on the cytoplasmic side. The segment at 393-472 (PPPSHYSQDQ…STDPKGLAQL (80 aa)) is disordered. Residues 456–465 (PSQQDSTSTD) show a composition bias toward polar residues.

Belongs to the P2X receptor family. Homotrimer and heterotrimer; functional P2XRs are organized as homomeric and heteromeric trimers. Homotrimer. Forms heterotrimer with P2RX1. Forms heterotrimer with P2RX6. Forms heterotrimer with P2RX3. In terms of tissue distribution, high levels in pituitary and vas deferens. Lower extent in spinal cord, bladder, brain, adrenal, testis, sensory epithelia from the inner ear.

Its subcellular location is the cell membrane. The enzyme catalyses Ca(2+)(in) = Ca(2+)(out). It catalyses the reaction K(+)(in) = K(+)(out). It carries out the reaction Na(+)(in) = Na(+)(out). Fast activation by external ATP. Exhibits slow desensitization during prolonged ATP activation. Not sensitive to the ATP agonist:alpha/beta-methylene-ATP. ATP-gated nonselective transmembrane cation channel permeable to potassium, sodium and calcium. Activation by extracellular ATP induces a variety of cellular responses, such as excitatory postsynaptic responses in sensory neurons, neuromuscular junctions (NMJ) formation, hearing, perception of taste and peristalsis. In the inner ear, regulates sound transduction and auditory neurotransmission, outer hair cell electromotility, inner ear gap junctions, and K(+) recycling. Mediates synaptic transmission between neurons and from neurons to smooth muscle. This chain is P2X purinoceptor 2 (P2rx2), found in Rattus norvegicus (Rat).